The chain runs to 617 residues: Serine/threonine-protein phosphatase 2A activator 1 (617 aa).

Residues 1 to 11 are compositionally biased toward pro residues; that stretch reads MDPTSKRPPPA. 5 disordered regions span residues 1–25, 84–169, 230–261, 376–398, and 572–617; these read MDPT…PKLE, VSTS…ESES, GAGG…TNEQ, SSPN…SDIT, and RFTP…PWTK. The span at 84–93 shows a compositional bias: polar residues; it reads VSTSEPTTDG. The segment covering 94-104 has biased composition (low complexity); that stretch reads QQQQQQQQQRQ. Positions 239-252 are enriched in acidic residues; the sequence is EEGTETETETETEG.

It belongs to the PTPA-type PPIase family.

The protein resides in the cytoplasm. The protein localises to the nucleus. The catalysed reaction is [protein]-peptidylproline (omega=180) = [protein]-peptidylproline (omega=0). In terms of biological role, PPIases accelerate the folding of proteins. It catalyzes the cis-trans isomerization of proline imidic peptide bonds in oligopeptides. Acts as a regulatory subunit for PP2A-like phosphatases modulating their activity or substrate specificity, probably by inducing a conformational change in the catalytic subunit, a direct target of the PPIase. Can reactivate inactive phosphatase PP2A-phosphatase methylesterase complexes (PP2Ai) in presence of ATP and Mg(2+) by dissociating the inactive form from the complex. The protein is Serine/threonine-protein phosphatase 2A activator 1 (rrd-1) of Neurospora crassa (strain ATCC 24698 / 74-OR23-1A / CBS 708.71 / DSM 1257 / FGSC 987).